A 563-amino-acid polypeptide reads, in one-letter code: Protein disulfide isomerase-like 1-4 (563 aa).

The signal sequence occupies residues 1–22 (MRSRSLLLVALATLLLHASASA). Residues 40-64 (NDPDGWLQEGSPDDDDDDDLFHHGQ) form a disordered region. A Thioredoxin 1 domain is found at 46–180 (LQEGSPDDDD…IVSWVNKKLA (135 aa)). The N-linked (GlcNAc...) asparagine glycan is linked to N82. Active-site nucleophile residues include C102 and C105. A disulfide bridge links C102 with C105. N185 and N315 each carry an N-linked (GlcNAc...) asparagine glycan. Residues 394–523 (FLEEKLTPFY…MYKFIKKHAS (130 aa)) enclose the Thioredoxin 2 domain. Catalysis depends on nucleophile residues C444 and C447. An intrachain disulfide couples C444 to C447. Residues 529-542 (KRPDSSATKTEKDQ) are compositionally biased toward basic and acidic residues. Positions 529-563 (KRPDSSATKTEKDQSTASTNLRGERSSGTNFKDEL) are disordered. Over residues 543–563 (STASTNLRGERSSGTNFKDEL) the composition is skewed to polar residues. Positions 560–563 (KDEL) match the Prevents secretion from ER motif.

It belongs to the protein disulfide isomerase family.

The protein resides in the endoplasmic reticulum lumen. It carries out the reaction Catalyzes the rearrangement of -S-S- bonds in proteins.. Functionally, acts as a protein-folding catalyst that interacts with nascent polypeptides to catalyze the formation, isomerization, and reduction or oxidation of disulfide bonds. May play a role in storage protein biogenesis. The protein is Protein disulfide isomerase-like 1-4 (PDIL1-4) of Oryza sativa subsp. japonica (Rice).